Consider the following 379-residue polypeptide: Class V chitinase (379 aa).

The first 24 residues, 1–24, serve as a signal peptide directing secretion; that stretch reads MSSTKLISLIVSITFFLTLQCSMA. In terms of domain architecture, GH18 spans 27–369; that stretch reads VVKASYWFPA…RAASQAWDAT (343 aa). Gly-99 is a chitin binding site. The active-site Proton donor is the Glu-140. Tyr-259 serves as a coordination point for chitin. Residues Asn-307 and Asn-327 are each glycosylated (N-linked (GlcNAc...) asparagine). Trp-348 is a chitin binding site.

This sequence belongs to the glycosyl hydrolase 18 family. Chitinase class V subfamily.

It carries out the reaction Random endo-hydrolysis of N-acetyl-beta-D-glucosaminide (1-&gt;4)-beta-linkages in chitin and chitodextrins.. It catalyses the reaction Hydrolysis of N,N'-diacetylchitobiose from the non-reducing end of chitin and chitodextrins.. It participates in glycan degradation; chitin degradation. Functionally, can hydrolyze glycol chitin and chitin oligosaccharides (e.g. N-acetylglucosamine) (GlcNAc)4, (GlcNAc)5 and (GlcNAc)6. Hydrolyzes N-acetylglucosamine oligomers producing dimers from the non-reducing end of the substrates. This chain is Class V chitinase, found in Arabidopsis thaliana (Mouse-ear cress).